Reading from the N-terminus, the 246-residue chain is Cell division protein ZapD (246 aa).

This sequence belongs to the ZapD family. As to quaternary structure, interacts with FtsZ.

The protein resides in the cytoplasm. Its function is as follows. Cell division factor that enhances FtsZ-ring assembly. Directly interacts with FtsZ and promotes bundling of FtsZ protofilaments, with a reduction in FtsZ GTPase activity. The sequence is that of Cell division protein ZapD from Vibrio vulnificus (strain CMCP6).